The sequence spans 189 residues: Adenylate kinase (189 aa).

ATP is bound at residue 10 to 15 (AAGKGT). Positions 30–59 (STGDMLRAARASGSELGQRVAKIMDEGGLV) are NMP. AMP is bound by residues Thr-31, Arg-36, 57 to 59 (GLV), 85 to 88 (GFPR), and Gln-92. The interval 126–136 (KRFEEQGRADD) is LID. Arg-127 serves as a coordination point for ATP. AMP is bound by residues Arg-133 and Arg-144. Position 172 (Gly-172) interacts with ATP.

The protein belongs to the adenylate kinase family. As to quaternary structure, monomer.

The protein resides in the cytoplasm. It catalyses the reaction AMP + ATP = 2 ADP. Its pathway is purine metabolism; AMP biosynthesis via salvage pathway; AMP from ADP: step 1/1. Functionally, catalyzes the reversible transfer of the terminal phosphate group between ATP and AMP. Plays an important role in cellular energy homeostasis and in adenine nucleotide metabolism. In Hyphomonas neptunium (strain ATCC 15444), this protein is Adenylate kinase.